The following is a 306-amino-acid chain: 2-phosphoglycerate kinase (306 aa).

Residues M1–E90 enclose the ATP-cone domain.

Belongs to the 2-phosphoglycerate kinase family. A divalent metal cation is required as a cofactor.

It carries out the reaction (2R)-2-phosphoglycerate + ATP = (2R)-2,3-bisphosphoglycerate + ADP + H(+). It functions in the pathway thermoadapter biosynthesis; cyclic 2,3-diphosphoglycerate biosynthesis; cyclic 2,3-diphosphoglycerate from 2-phospho-D-glycerate: step 1/2. Its function is as follows. Catalyzes the phosphorylation of 2-phosphoglycerate to 2,3-diphosphoglycerate. Involved in the biosynthesis of cyclic 2,3-bisphosphoglycerate, a thermoprotectant. This Methanothermobacter thermautotrophicus (strain ATCC 29096 / DSM 1053 / JCM 10044 / NBRC 100330 / Delta H) (Methanobacterium thermoautotrophicum) protein is 2-phosphoglycerate kinase.